The following is a 102-amino-acid chain: Antitoxin VapB46 (102 aa).

It belongs to the phD/YefM antitoxin family.

Antitoxin component of a type II toxin-antitoxin (TA) system. Neutralizes the effect of cognate toxin VapC46. This Mycobacterium tuberculosis (strain CDC 1551 / Oshkosh) protein is Antitoxin VapB46 (vapB46).